The chain runs to 749 residues: Adenosylcobalamin-dependent ribonucleoside-triphosphate reductase (749 aa).

C124 and C427 are oxidised to a cystine. Residues 152-163 (SMPFSFMFDQLM) are effector region-1. The segment at 173–321 (TPNNVHQMPV…MGNMIGKTVV (149 aa)) is effector region-2. Residues C416 and E418 contribute to the active site. Positions 573-634 (FHYARYLIQR…EPAFASAGEV (62 aa)) are adenosylcobalamin-binding-1. The interval 693–734 (FKQAPKEPIDAATYDAKCQEITADVAEKFAAMTGNHDQKDIE) is adenosylcobalamin-binding-2.

This sequence belongs to the class II ribonucleoside-triphosphate reductase family. As to quaternary structure, monomer. The cofactor is adenosylcob(III)alamin.

It carries out the reaction a 2'-deoxyribonucleoside 5'-triphosphate + [thioredoxin]-disulfide + H2O = a ribonucleoside 5'-triphosphate + [thioredoxin]-dithiol. With respect to regulation, allosterically regulated by ATP and dNTP. This is Adenosylcobalamin-dependent ribonucleoside-triphosphate reductase (rtpR) from Levilactobacillus brevis (strain ATCC 367 / BCRC 12310 / CIP 105137 / JCM 1170 / LMG 11437 / NCIMB 947 / NCTC 947) (Lactobacillus brevis).